The chain runs to 472 residues: Uronate isomerase (472 aa).

The protein belongs to the metallo-dependent hydrolases superfamily. Uronate isomerase family.

It carries out the reaction D-glucuronate = D-fructuronate. It catalyses the reaction aldehydo-D-galacturonate = keto-D-tagaturonate. Its pathway is carbohydrate metabolism; pentose and glucuronate interconversion. This Xanthomonas axonopodis pv. citri (strain 306) protein is Uronate isomerase.